A 123-amino-acid chain; its full sequence is Small ribosomal subunit protein uS12 (123 aa).

A 3-methylthioaspartic acid modification is found at Asp89.

This sequence belongs to the universal ribosomal protein uS12 family. Part of the 30S ribosomal subunit. Contacts proteins S8 and S17. May interact with IF1 in the 30S initiation complex.

With S4 and S5 plays an important role in translational accuracy. Functionally, interacts with and stabilizes bases of the 16S rRNA that are involved in tRNA selection in the A site and with the mRNA backbone. Located at the interface of the 30S and 50S subunits, it traverses the body of the 30S subunit contacting proteins on the other side and probably holding the rRNA structure together. The combined cluster of proteins S8, S12 and S17 appears to hold together the shoulder and platform of the 30S subunit. This Granulibacter bethesdensis (strain ATCC BAA-1260 / CGDNIH1) protein is Small ribosomal subunit protein uS12.